The primary structure comprises 491 residues: Nucleotidyltransferase MB21D2 (491 aa).

Positions 431–442 (RGSTTSIPSPQS) are enriched in polar residues. A disordered region spans residues 431 to 452 (RGSTTSIPSPQSDGGDPNQPDD). Thr435 is modified (phosphothreonine). Residues Ser436, Ser439, and Ser442 each carry the phosphoserine modification.

Belongs to the mab-21 family.

Functionally, probable nucleotidyltransferase that catalyzes the formation of cyclic dinucleotide second messenger in response to some unknown stimulus. This chain is Nucleotidyltransferase MB21D2, found in Homo sapiens (Human).